The sequence spans 118 residues: Cytochrome b-c1 complex subunit 7 (118 aa).

The igE-binding. Immunodominant epitope; induces specific IgE antibody production in mice. Causes degranulation of rat basophilic leukemia (RBL) cells and the release of beta-hexosaminidase from them stretch occupies residues 1–32 (MVHLTKTLRFINNPGFRKFYYGLQGYNKYGLY).

This sequence belongs to the UQCRB/QCR7 family. As to quaternary structure, component of the ubiquinol-cytochrome c oxidoreductase (cytochrome b-c1 complex, complex III, CIII), a multisubunit enzyme composed of 3 respiratory subunits cytochrome b, cytochrome c1 and Rieske protein, 2 core protein subunits, and additional low-molecular weight protein subunits. The complex exists as an obligatory dimer and forms supercomplexes (SCs) in the inner mitochondrial membrane with cytochrome c oxidase (complex IV, CIV).

The protein resides in the mitochondrion inner membrane. Functionally, component of the ubiquinol-cytochrome c oxidoreductase, a multisubunit transmembrane complex that is part of the mitochondrial electron transport chain which drives oxidative phosphorylation. The respiratory chain contains 3 multisubunit complexes succinate dehydrogenase (complex II, CII), ubiquinol-cytochrome c oxidoreductase (cytochrome b-c1 complex, complex III, CIII) and cytochrome c oxidase (complex IV, CIV), that cooperate to transfer electrons derived from NADH and succinate to molecular oxygen, creating an electrochemical gradient over the inner membrane that drives transmembrane transport and the ATP synthase. The cytochrome b-c1 complex catalyzes electron transfer from ubiquinol to cytochrome c, linking this redox reaction to translocation of protons across the mitochondrial inner membrane, with protons being carried across the membrane as hydrogens on the quinol. In the process called Q cycle, 2 protons are consumed from the matrix, 4 protons are released into the intermembrane space and 2 electrons are passed to cytochrome c. The polypeptide is Cytochrome b-c1 complex subunit 7 (Dermatophagoides pteronyssinus (European house dust mite)).